A 731-amino-acid chain; its full sequence is E3 ubiquitin-protein ligase COP1 (731 aa).

Positions 1–40 are disordered; sequence MSGSRQAGSGSAGTSPGSSAASSVTSASSSLSSSPSPPSV. The Nuclear localization signal 1 signature appears at 109 to 113; sequence GSRKR. Residues 136–174 form an RING-type zinc finger; sequence CPICFDMIEEAYMTKCGHSFCYKCIHQSLEDNNRCPKCN. Residues 195 to 206 carry the Nuclear localization signal 2 motif; the sequence is KQKQRFEEKRFK. Positions 233-301 form a coiled coil; the sequence is LDLANVNLML…DIKRVEEMSG (69 aa). Positions 235-245 match the Nuclear export signal motif; it reads LANVNLMLELL. The segment at 305–325 is disordered; that stretch reads PVSEDSTVPQFEAPSPSHSSI. 7 WD repeats span residues 419–458, 468–508, 511–551, 553–593, 597–635, 638–677, and 691–729; these read NGSS…QDAV, TCNS…RSKV, EHEK…SVAS, EAKA…QPIM, GHRK…CLRS, GHIN…TLLT, and RKED…KVLE. Residues 643 to 645 are interaction with TRIB1; that stretch reads KNF.

It belongs to the COP1 family. In terms of assembly, homodimer. Homodimerization is mediated by the coiled coil domain. Component of the DCX DET1-COP1 ubiquitin ligase complex at least composed of RBX1, DET1, DDB1, CUL4A and COP1. Isoform 2 does not interact with CUL4A but still binds to RBX1, suggesting that the interaction may be mediated by another cullin protein. Isoform 1 and isoform 2 interact with CUL5 but not with CUL1, CUL2 not CUL3. Interacts with bZIP transcription factors JUN, JUNB and JUND but not with FOS, ATF2 nor XBP1. Interacts with p53 (TP53). Interacts with COPS6; this interaction stabilizes RFWD2 through reducing its auto-ubiquitination and decelerating its turnover rate. Interacts with SFN; this interaction leads to SFN degradation. Isoform 4 forms heterodimers with isoform 1, preventing its association with DET1. Interacts with p53/TP53 and MTA1. Interacts with TRIB1 (via C-terminus) and TRIB2. Post-translationally, autoubiquitinated. MTA1 destabilizes it by promoting its autoubiquitination. As to expression, ubiquitously expressed at low level. Expressed at higher level in testis, placenta, skeletal muscle and heart.

The protein resides in the nucleus speckle. The protein localises to the cytoplasm. The enzyme catalyses S-ubiquitinyl-[E2 ubiquitin-conjugating enzyme]-L-cysteine + [acceptor protein]-L-lysine = [E2 ubiquitin-conjugating enzyme]-L-cysteine + N(6)-ubiquitinyl-[acceptor protein]-L-lysine.. It participates in protein modification; protein ubiquitination. Its activity is regulated as follows. TRIB1 competes with substrates for RFWD2 binding. In terms of biological role, E3 ubiquitin-protein ligase that mediates ubiquitination and subsequent proteasomal degradation of target proteins. E3 ubiquitin ligases accept ubiquitin from an E2 ubiquitin-conjugating enzyme in the form of a thioester and then directly transfers the ubiquitin to targeted substrates. Involved in JUN ubiquitination and degradation. Directly involved in p53 (TP53) ubiquitination and degradation, thereby abolishing p53-dependent transcription and apoptosis. Ubiquitinates p53 independently of MDM2 or RCHY1. Probably mediates E3 ubiquitin ligase activity by functioning as the essential RING domain subunit of larger E3 complexes. In contrast, it does not constitute the catalytic RING subunit in the DCX DET1-COP1 complex that negatively regulates JUN, the ubiquitin ligase activity being mediated by RBX1. Involved in 14-3-3 protein sigma/SFN ubiquitination and proteasomal degradation, leading to AKT activation and promotion of cell survival. Ubiquitinates MTA1 leading to its proteasomal degradation. Upon binding to TRIB1, ubiquitinates CEBPA, which lacks a canonical COP1-binding motif. In Homo sapiens (Human), this protein is E3 ubiquitin-protein ligase COP1.